The primary structure comprises 237 residues: Phosphoribosylaminoimidazole-succinocarboxamide synthase (237 aa).

Belongs to the SAICAR synthetase family.

It catalyses the reaction 5-amino-1-(5-phospho-D-ribosyl)imidazole-4-carboxylate + L-aspartate + ATP = (2S)-2-[5-amino-1-(5-phospho-beta-D-ribosyl)imidazole-4-carboxamido]succinate + ADP + phosphate + 2 H(+). It participates in purine metabolism; IMP biosynthesis via de novo pathway; 5-amino-1-(5-phospho-D-ribosyl)imidazole-4-carboxamide from 5-amino-1-(5-phospho-D-ribosyl)imidazole-4-carboxylate: step 1/2. The sequence is that of Phosphoribosylaminoimidazole-succinocarboxamide synthase from Fusobacterium nucleatum subsp. nucleatum (strain ATCC 25586 / DSM 15643 / BCRC 10681 / CIP 101130 / JCM 8532 / KCTC 2640 / LMG 13131 / VPI 4355).